Reading from the N-terminus, the 142-residue chain is Cystatin-8 (142 aa).

Residues 1-21 form the signal peptide; that stretch reads MPRCRWLSLILLTIPLALVAR. N-linked (GlcNAc...) asparagine glycosylation is found at Asn27 and Asn39. Residues 77–81 carry the Secondary area of contact motif; the sequence is QVTNL. 2 disulfide bridges follow: Cys95-Cys105 and Cys119-Cys139.

The protein belongs to the cystatin family. As to expression, proximal caput region of the epididymis. Lower expression in the testis. Within the testis it is localized to the elongating spermatids, whereas within the epididymis it is exclusively synthesized by the proximal caput epithelium.

Its subcellular location is the secreted. Functionally, performs a specialized role during sperm development and maturation. This chain is Cystatin-8 (CST8), found in Homo sapiens (Human).